A 1905-amino-acid chain; its full sequence is Low-density lipoprotein receptor-related protein 4 (1905 aa).

An N-terminal signal peptide occupies residues 1 to 20 (MRRWWGALLLGALLCAHGIA). At 21-1725 (SSLECACGRS…AAPGEGLHVS (1705 aa)) the chain is on the extracellular side. LDL-receptor class A domains lie at 26–67 (ACGR…DGCT), 70–106 (TCSP…QDCP), 109–144 (ECEE…EQCD), 147–183 (KCSD…ESCP), 190–226 (PCNL…SDCS), 230–266 (PCRS…RNCT), 269–305 (MCTA…ENCE), and 311–350 (QCAS…QNCR). Intrachain disulfides connect cysteine 27–cysteine 44, cysteine 34–cysteine 57, cysteine 51–cysteine 66, cysteine 71–cysteine 83, cysteine 78–cysteine 96, cysteine 90–cysteine 105, cysteine 110–cysteine 122, cysteine 117–cysteine 135, cysteine 129–cysteine 143, cysteine 148–cysteine 160, cysteine 155–cysteine 173, cysteine 167–cysteine 182, cysteine 191–cysteine 203, cysteine 198–cysteine 216, cysteine 210–cysteine 225, cysteine 231–cysteine 243, cysteine 238–cysteine 256, cysteine 250–cysteine 265, cysteine 270–cysteine 282, cysteine 277–cysteine 295, cysteine 289–cysteine 304, cysteine 312–cysteine 324, cysteine 319–cysteine 337, cysteine 331–cysteine 349, cysteine 358–cysteine 369, cysteine 365–cysteine 378, cysteine 380–cysteine 393, cysteine 399–cysteine 409, cysteine 405–cysteine 418, and cysteine 420–cysteine 433. Asparagine 264 carries an N-linked (GlcNAc...) asparagine glycan. In terms of domain architecture, EGF-like 1; atypical spans 354 to 394 (GEENCNVNNGGCAQKCQMVRGAVQCTCHTGYRLTEDGRTCQ). The EGF-like 2; calcium-binding domain occupies 395–434 (DVNECAEEGYCSQGCTNTEGAFQCWCEAGYELRPDRRSCK). LDL-receptor class B repeat units follow at residues 480–522 (ELVF…DWVH), 523–565 (DKLY…HPME), 566–609 (GTIY…DYAG), 610–652 (RRMY…FEDS), and 653–693 (LYWT…LHPQ). N-linked (GlcNAc...) asparagine glycosylation occurs at asparagine 498. An EGF-like 3 domain is found at 698–737 (GKNRCGDNNGGCTHLCLPSGQNYTCACPTGFRKINSHACA). 3 cysteine pairs are disulfide-bonded: cysteine 702–cysteine 713, cysteine 709–cysteine 722, and cysteine 724–cysteine 736. A glycan (N-linked (GlcNAc...) asparagine) is linked at asparagine 719. LDL-receptor class B repeat units follow at residues 785–827 (DHVY…DWVT), 828–870 (NKLY…EPMG), 871–914 (GYMY…DYGS), 915–956 (QRLY…LYGQ), and 957–998 (RIYW…FHRQ). Asparagine 901 carries an N-linked (GlcNAc...) asparagine glycan. Asparagine 1077 is a glycosylation site (N-linked (GlcNAc...) asparagine). LDL-receptor class B repeat units follow at residues 1093-1135 (GKVY…DAIG), 1136-1178 (RKVY…YHEM), 1179-1222 (GFMY…DKTS), 1223-1263 (SQLL…LLDS), 1264-1306 (YIYW…DRAQ), 1397-1439 (GKVY…DWVA), 1440-1482 (RNLY…FPRK), 1483-1526 (GYLF…DYDT), 1527-1568 (RRIY…QDRW), and 1569-1610 (IYWT…SPQR). Asparagine 1415 and asparagine 1467 each carry an N-linked (GlcNAc...) asparagine glycan. The tract at residues 1661–1696 (ATSMNEKSPVLPNTLPTTLHSSTTKTRTSLEGAGGR) is disordered. The segment covering 1674–1690 (TLPTTLHSSTTKTRTSL) has biased composition (low complexity). The helical transmembrane segment at 1726–1746 (YAIGGLLSILLILLVIAALML) threads the bilayer. Residues 1747 to 1905 (YRHRKSKFTD…ERKLSSESQV (159 aa)) are Cytoplasmic-facing. The tract at residues 1852 to 1905 (ASSGSLDDTETEQLLQEEQSECSSVHTAATPERRGSLPDTGWKHERKLSSESQV) is disordered. The segment covering 1882–1905 (PERRGSLPDTGWKHERKLSSESQV) has biased composition (basic and acidic residues).

This sequence belongs to the LDLR family. Homooligomer. Interacts with MUSK; the heterodimer forms an AGRIN receptor complex that binds AGRIN resulting in activation of MUSK. Interacts (via the extracellular domain) with SOST; the interaction facilitates the inhibition of Wnt signaling. Interacts with MESD; the interaction promotes glycosylation of LRP4 and its cell-surface expression. In terms of processing, N-glycosylation is required for cell surface location.

It is found in the cell membrane. Functionally, mediates SOST-dependent inhibition of bone formation. Functions as a specific facilitator of SOST-mediated inhibition of Wnt signaling. Plays a key role in the formation and the maintenance of the neuromuscular junction (NMJ), the synapse between motor neuron and skeletal muscle. Directly binds AGRIN and recruits it to the MUSK signaling complex. Mediates the AGRIN-induced phosphorylation of MUSK, the kinase of the complex. The activation of MUSK in myotubes induces the formation of NMJ by regulating different processes including the transcription of specific genes and the clustering of AChR in the postsynaptic membrane. Alternatively, may be involved in the negative regulation of the canonical Wnt signaling pathway, being able to antagonize the LRP6-mediated activation of this pathway. More generally, has been proposed to function as a cell surface endocytic receptor binding and internalizing extracellular ligands for degradation by lysosomes. Plays an essential role in the process of digit differentiation. The polypeptide is Low-density lipoprotein receptor-related protein 4 (Lrp4) (Mus musculus (Mouse)).